A 224-amino-acid polypeptide reads, in one-letter code: Ribosome maturation factor RimP (224 aa).

A disordered region spans residues 194–224; it reads REGRIPGDDLGSEEAGEQSDETASGEAEDKE. Over residues 203–213 the composition is skewed to acidic residues; it reads LGSEEAGEQSD.

The protein belongs to the RimP family.

The protein resides in the cytoplasm. In terms of biological role, required for maturation of 30S ribosomal subunits. This is Ribosome maturation factor RimP from Brucella anthropi (strain ATCC 49188 / DSM 6882 / CCUG 24695 / JCM 21032 / LMG 3331 / NBRC 15819 / NCTC 12168 / Alc 37) (Ochrobactrum anthropi).